The sequence spans 215 residues: Cytochrome b6 (215 aa).

A helical membrane pass occupies residues 32 to 52 (IFYCLGGITLTCFLVQVATGF). Heme c is bound at residue Cys-35. 2 residues coordinate heme b: His-86 and His-100. Transmembrane regions (helical) follow at residues 90-110 (ASMM…TGGF), 116-136 (LTWV…VTGY), and 186-206 (LHTF…FPMI). Residues His-187 and His-202 each coordinate heme b.

Belongs to the cytochrome b family. PetB subfamily. The 4 large subunits of the cytochrome b6-f complex are cytochrome b6, subunit IV (17 kDa polypeptide, PetD), cytochrome f and the Rieske protein, while the 4 small subunits are PetG, PetL, PetM and PetN. The complex functions as a dimer. Heme b is required as a cofactor. Heme c serves as cofactor.

The protein resides in the plastid. Its subcellular location is the chloroplast thylakoid membrane. Functionally, component of the cytochrome b6-f complex, which mediates electron transfer between photosystem II (PSII) and photosystem I (PSI), cyclic electron flow around PSI, and state transitions. This is Cytochrome b6 from Helianthus annuus (Common sunflower).